Reading from the N-terminus, the 295-residue chain is Homeobox protein XHOX-7.1 (295 aa).

Disordered stretches follow at residues 75 to 115 (RKPG…PISL) and 134 to 175 (KPES…KPRT). Residues 84–97 (SSPTGSPLAGTSHS) show a composition bias toward polar residues. The span at 141 to 153 (SSWIQSPSFSPSP) shows a compositional bias: low complexity. Positions 164–174 (LRKHKTNRKPR) are enriched in basic residues. Residues 170-229 (NRKPRTPFTTSQLLALERKFRQKQYLSIAERAEFSSSLNLTETQVKIWFQNRRAKAKRLQ) constitute a DNA-binding region (homeobox).

It belongs to the Msh homeobox family.

Its subcellular location is the nucleus. The polypeptide is Homeobox protein XHOX-7.1 (Xenopus laevis (African clawed frog)).